Here is a 590-residue protein sequence, read N- to C-terminus: UvrABC system protein C (590 aa).

The GIY-YIG domain occupies 11 to 85; sequence ETPGVYLWKR…IKAHRPLYNV (75 aa). The 36-residue stretch at 194-229 folds into the UVR domain; sequence DGLLQELEAKMREAARRLEFERAAEIRDQMEALRAF.

The protein belongs to the UvrC family. As to quaternary structure, interacts with UvrB in an incision complex.

It is found in the cytoplasm. Functionally, the UvrABC repair system catalyzes the recognition and processing of DNA lesions. UvrC both incises the 5' and 3' sides of the lesion. The N-terminal half is responsible for the 3' incision and the C-terminal half is responsible for the 5' incision. In Thermus thermophilus (strain ATCC 27634 / DSM 579 / HB8), this protein is UvrABC system protein C.